A 186-amino-acid polypeptide reads, in one-letter code: Probable nicotinate-nucleotide adenylyltransferase (186 aa).

Belongs to the NadD family.

The catalysed reaction is nicotinate beta-D-ribonucleotide + ATP + H(+) = deamido-NAD(+) + diphosphate. Its pathway is cofactor biosynthesis; NAD(+) biosynthesis; deamido-NAD(+) from nicotinate D-ribonucleotide: step 1/1. Catalyzes the reversible adenylation of nicotinate mononucleotide (NaMN) to nicotinic acid adenine dinucleotide (NaAD). This chain is Probable nicotinate-nucleotide adenylyltransferase, found in Tropheryma whipplei (strain TW08/27) (Whipple's bacillus).